The sequence spans 141 residues: Protein MGF 100-2L (141 aa).

The protein belongs to the asfivirus MGF 100 family.

Functionally, plays a role in virus cell tropism, and may be required for efficient virus replication in macrophages. The polypeptide is Protein MGF 100-2L (African swine fever virus (isolate Pig/Kenya/KEN-50/1950) (ASFV)).